Here is a 428-residue protein sequence, read N- to C-terminus: tRNA(Ile2) 2-agmatinylcytidine synthetase TiaS (428 aa).

Belongs to the TiaS family.

Its subcellular location is the cytoplasm. The enzyme catalyses cytidine(34) in tRNA(Ile2) + agmatine + ATP + H2O = 2-agmatinylcytidine(34) in tRNA(Ile2) + AMP + 2 phosphate + 2 H(+). Functionally, ATP-dependent agmatine transferase that catalyzes the formation of 2-agmatinylcytidine (agm2C) at the wobble position (C34) of tRNA(Ile2), converting the codon specificity from AUG to AUA. The sequence is that of tRNA(Ile2) 2-agmatinylcytidine synthetase TiaS from Methanosarcina mazei (strain ATCC BAA-159 / DSM 3647 / Goe1 / Go1 / JCM 11833 / OCM 88) (Methanosarcina frisia).